Consider the following 315-residue polypeptide: Gamma-hemolysin component C (315 aa).

A signal peptide spans 1 to 29 (MLKNKILATTLSVSLLAPLANPLLENAKA).

Belongs to the aerolysin family. As to quaternary structure, toxicity requires sequential binding and synergistic association of a class S and a class F component which form heterooligomeric complexes. HlgC (class S) associates with HlgB (class F) thus forming an CB toxin.

Toxin that seems to act by forming pores in the membrane of the cell. Has a hemolytic and a leucotoxic activity. The polypeptide is Gamma-hemolysin component C (hlgC) (Staphylococcus aureus (strain Mu50 / ATCC 700699)).